Here is a 348-residue protein sequence, read N- to C-terminus: Lipooligosaccharide heptosyltransferase 2 (348 aa).

This sequence belongs to the glycosyltransferase 9 family.

The catalysed reaction is an L-alpha-D-Hep-(1-&gt;5)-[alpha-Kdo-(2-&gt;4)]-alpha-Kdo-(2-&gt;6)-lipid A + ADP-L-glycero-beta-D-manno-heptose = an L-alpha-D-Hep-(1-&gt;3)-L-alpha-D-Hep-(1-&gt;5)-[alpha-Kdo-(2-&gt;4)]-alpha-Kdo-(2-&gt;6)-lipid A + ADP + H(+). The protein operates within bacterial outer membrane biogenesis; LOS core biosynthesis. Glycosyltransferase involved in the biosynthesis of the core oligosaccharide region of lipooligosaccharide (LOS). Catalyzes the addition of a heptose unit to the heptosyl-Kdo2-lipid A module. This chain is Lipooligosaccharide heptosyltransferase 2, found in Haemophilus ducreyi (strain 35000HP / ATCC 700724).